We begin with the raw amino-acid sequence, 73 residues long: Conotoxin Lt9a (73 aa).

Positions 1-23 (MTLTKSAVLILVLLLAFDNFADV) are cleaved as a signal peptide. The propeptide occupies 24–40 (QPGLITMGGGRLSNLLS). Intrachain disulfides connect Cys48/Cys62, Cys53/Cys64, and Cys59/Cys69.

The protein belongs to the conotoxin P superfamily. Expressed by the venom duct.

It localises to the secreted. In terms of biological role, probable neurotoxin that inhibits ion channels. This chain is Conotoxin Lt9a, found in Conus litteratus (Lettered cone).